A 99-amino-acid polypeptide reads, in one-letter code: Probable small ribosomal subunit protein cS23 (99 aa).

The protein belongs to the chloroplast-specific ribosomal protein cS23 family. Part of the 30S ribosomal subunit.

Its function is as follows. Probably a ribosomal protein or a ribosome-associated protein. The chain is Probable small ribosomal subunit protein cS23 from Synechococcus sp. (strain JA-3-3Ab) (Cyanobacteria bacterium Yellowstone A-Prime).